An 82-amino-acid chain; its full sequence is MKLTCALIVAMLLLTACQLITTDDFRGRQQYRTARSRTKMQNYKIFRLTKRCDAPNAPCEKFDNDCCDACMLREKQQPICAV.

An N-terminal signal peptide occupies residues 1–22 (MKLTCALIVAMLLLTACQLITT). A propeptide spanning residues 23–49 (DDFRGRQQYRTARSRTKMQNYKIFRLT) is cleaved from the precursor. Disulfide bonds link Cys52–Cys67, Cys59–Cys70, and Cys66–Cys80.

The protein belongs to the conotoxin O1 superfamily. As to expression, expressed by the venom duct.

The protein localises to the secreted. The protein is Conotoxin MiK42 of Conus miles (Soldier cone).